We begin with the raw amino-acid sequence, 721 residues long: Phosphoribosylformylglycinamidine synthase subunit PurL (721 aa).

The active site involves His47. ATP is bound by residues Tyr50 and Lys89. Glu91 lines the Mg(2+) pocket. Residues 92–95 (SHNH) and Arg114 each bind substrate. His93 acts as the Proton acceptor in catalysis. Residue Asp115 participates in Mg(2+) binding. Gln238 serves as a coordination point for substrate. Asp266 serves as a coordination point for Mg(2+). 310 to 312 (ESQ) provides a ligand contact to substrate. Residues Asp490 and Gly527 each coordinate ATP. Mg(2+) is bound at residue Asn528. Ser530 is a substrate binding site.

Belongs to the FGAMS family. In terms of assembly, monomer. Part of the FGAM synthase complex composed of 1 PurL, 1 PurQ and 2 PurS subunits.

It is found in the cytoplasm. It carries out the reaction N(2)-formyl-N(1)-(5-phospho-beta-D-ribosyl)glycinamide + L-glutamine + ATP + H2O = 2-formamido-N(1)-(5-O-phospho-beta-D-ribosyl)acetamidine + L-glutamate + ADP + phosphate + H(+). It participates in purine metabolism; IMP biosynthesis via de novo pathway; 5-amino-1-(5-phospho-D-ribosyl)imidazole from N(2)-formyl-N(1)-(5-phospho-D-ribosyl)glycinamide: step 1/2. Functionally, part of the phosphoribosylformylglycinamidine synthase complex involved in the purines biosynthetic pathway. Catalyzes the ATP-dependent conversion of formylglycinamide ribonucleotide (FGAR) and glutamine to yield formylglycinamidine ribonucleotide (FGAM) and glutamate. The FGAM synthase complex is composed of three subunits. PurQ produces an ammonia molecule by converting glutamine to glutamate. PurL transfers the ammonia molecule to FGAR to form FGAM in an ATP-dependent manner. PurS interacts with PurQ and PurL and is thought to assist in the transfer of the ammonia molecule from PurQ to PurL. This is Phosphoribosylformylglycinamidine synthase subunit PurL from Ruegeria sp. (strain TM1040) (Silicibacter sp.).